Consider the following 689-residue polypeptide: Methionine--tRNA ligase (689 aa).

Positions 15–25 (PYANGPVHIGH) match the 'HIGH' region motif. Residues cysteine 147, cysteine 150, cysteine 160, and cysteine 163 each contribute to the Zn(2+) site. The 'KMSKS' region motif lies at 342 to 346 (KISTS). Position 345 (threonine 345) interacts with ATP. Residues 588-689 (DFAKMDIRVA…AVVNAGSMIG (102 aa)) form the tRNA-binding domain.

It belongs to the class-I aminoacyl-tRNA synthetase family. MetG type 1 subfamily. As to quaternary structure, homodimer. Zn(2+) serves as cofactor.

It localises to the cytoplasm. It catalyses the reaction tRNA(Met) + L-methionine + ATP = L-methionyl-tRNA(Met) + AMP + diphosphate. In terms of biological role, is required not only for elongation of protein synthesis but also for the initiation of all mRNA translation through initiator tRNA(fMet) aminoacylation. This is Methionine--tRNA ligase from Cytophaga hutchinsonii (strain ATCC 33406 / DSM 1761 / CIP 103989 / NBRC 15051 / NCIMB 9469 / D465).